The following is a 101-amino-acid chain: NADH-quinone oxidoreductase subunit K (101 aa).

3 helical membrane passes run 2 to 22 (TLSA…YGAL), 28 to 48 (VIVL…FVAF), and 62 to 82 (FALF…AALI).

The protein belongs to the complex I subunit 4L family. As to quaternary structure, NDH-1 is composed of 14 different subunits. Subunits NuoA, H, J, K, L, M, N constitute the membrane sector of the complex.

Its subcellular location is the cell membrane. It catalyses the reaction a quinone + NADH + 5 H(+)(in) = a quinol + NAD(+) + 4 H(+)(out). In terms of biological role, NDH-1 shuttles electrons from NADH, via FMN and iron-sulfur (Fe-S) centers, to quinones in the respiratory chain. The immediate electron acceptor for the enzyme in this species is believed to be a menaquinone. Couples the redox reaction to proton translocation (for every two electrons transferred, four hydrogen ions are translocated across the cytoplasmic membrane), and thus conserves the redox energy in a proton gradient. The chain is NADH-quinone oxidoreductase subunit K from Geobacillus kaustophilus (strain HTA426).